A 228-amino-acid polypeptide reads, in one-letter code: LOB domain-containing protein 30 (228 aa).

An LOB domain is found at 16-118 (GPCGACKFLR…TELSYLQAHL (103 aa)). Residues 188–228 (SNMGGGGELQALAREFIHGGQMPAQPSPGTSGSASSVIKRE) form a disordered region. Residues 214–228 (SPGTSGSASSVIKRE) are compositionally biased toward polar residues.

The protein belongs to the LOB domain-containing protein family. As to expression, expressed in roots, stems, leaves and flowers. Expressed in vascular tissues of hypocotyls, leaves, roots, developing floral organs and siliques.

Its function is as follows. Involved in the positive regulation of tracheary element (TE) differentiation. Involved in a positive feedback loop that maintains or promotes NAC030/VND7 expression that regulates TE differentiation-related genes. In Arabidopsis thaliana (Mouse-ear cress), this protein is LOB domain-containing protein 30 (LBD30).